The following is a 481-amino-acid chain: G-protein coupled receptor 37-like 1 (481 aa).

A signal peptide spans 1–25; sequence MRWLWPLAVSLAVILAVGLSRVSGG. Disordered regions lie at residues 26–58 and 70–108; these read APLH…GVQQ and PIHP…NLTG. Residues 26–134 lie on the Extracellular side of the membrane; sequence APLHLGRHRA…ESSYSAYAIM (109 aa). Thr79 and Thr85 each carry an O-linked (GalNAc...) threonine glycan. An O-linked (GalNAc...) serine glycan is attached at Ser86. O-linked (GalNAc...) threonine glycosylation occurs at Thr95. Asn105 is a glycosylation site (N-linked (GlcNAc...) asparagine). O-linked (GalNAc...) threonine glycosylation occurs at Thr107. The chain crosses the membrane as a helical span at residues 135-155; sequence LLALVVFAVGIVGNLSVMCIV. The Cytoplasmic portion of the chain corresponds to 156–167; that stretch reads WHSYYLKSAWNS. Residues 168–188 traverse the membrane as a helical segment; it reads ILASLALWDFLVLFFCLPIVI. Residues 189–205 lie on the Extracellular side of the membrane; the sequence is FNEITKQRLLGDVSCRA. A disulfide bridge connects residues Cys203 and Cys286. A helical membrane pass occupies residues 206–226; sequence VPFMEVSSLGVTTFSLCALGI. Over 227-251 the chain is Cytoplasmic; the sequence is DRFHVATSTLPKVRPIERCQSILAK. A helical membrane pass occupies residues 252–272; sequence LAVIWVGSMTLAVPELLLWQL. Topologically, residues 273-310 are extracellular; that stretch reads AQEPAPTMGTLDSCIMKPSASLPESLYSLVMTYQNARM. A helical membrane pass occupies residues 311–331; sequence WWYFGCYFCLPILFTVTCQLV. Topologically, residues 332–361 are cytoplasmic; sequence TWRVRGPPGRKSECRASKHEQCESQLNSTV. A helical transmembrane segment spans residues 362-382; it reads VGLTVVYAFCTLPENVCNIVV. Topologically, residues 383–398 are extracellular; the sequence is AYLSTELTRQTLDLLG. Residues 399 to 419 form a helical membrane-spanning segment; sequence LINQFSTFFKGAITPVLLLCI. Topologically, residues 420 to 481 are cytoplasmic; sequence CRPLGQAFLD…PPLLPLGTPC (62 aa). Ser471 carries the phosphoserine modification. Phosphothreonine is present on Thr479.

This sequence belongs to the G-protein coupled receptor 1 family. Interacts with the PTCH1 receptor. Post-translationally, O-glycosylated. Undergoes metalloprotease-mediated cleavage which reduces its constitutive activity. In terms of processing, ubiquitinated. Expressed in primary cortical astrocytes (at protein level). Expressed in the central nervous system.

It is found in the cell membrane. The protein localises to the cell projection. Its subcellular location is the cilium membrane. Functionally, G-protein coupled receptor. Has been shown to bind the neuroprotective and glioprotective factor prosaposin (PSAP), leading to endocytosis followed by an ERK phosphorylation cascade. However, other studies have shown that prosaposin does not increase activity. It has been suggested that GPR37L1 is a constitutively active receptor which signals through the guanine nucleotide-binding protein G(s) subunit alpha. Participates in the regulation of postnatal cerebellar development by modulating the Shh pathway. Regulates baseline blood pressure in females and protects against cardiovascular stress in males. Mediates inhibition of astrocyte glutamate transporters and reduction in neuronal N-methyl-D-aspartate receptor activity. The protein is G-protein coupled receptor 37-like 1 (GPR37L1) of Homo sapiens (Human).